The following is a 244-amino-acid chain: ATP synthase subunit b 2 (244 aa).

A helical transmembrane segment spans residues 2 to 22 (LIDWFTIVAQIINFLILVFLL).

This sequence belongs to the ATPase B chain family. In terms of assembly, F-type ATPases have 2 components, F(1) - the catalytic core - and F(0) - the membrane proton channel. F(1) has five subunits: alpha(3), beta(3), gamma(1), delta(1), epsilon(1). F(0) has four main subunits: a(1), b(1), b'(1) and c(10-14). The alpha and beta chains form an alternating ring which encloses part of the gamma chain. F(1) is attached to F(0) by a central stalk formed by the gamma and epsilon chains, while a peripheral stalk is formed by the delta, b and b' chains.

The protein resides in the cellular thylakoid membrane. Its function is as follows. F(1)F(0) ATP synthase produces ATP from ADP in the presence of a proton or sodium gradient. F-type ATPases consist of two structural domains, F(1) containing the extramembraneous catalytic core and F(0) containing the membrane proton channel, linked together by a central stalk and a peripheral stalk. During catalysis, ATP synthesis in the catalytic domain of F(1) is coupled via a rotary mechanism of the central stalk subunits to proton translocation. Functionally, component of the F(0) channel, it forms part of the peripheral stalk, linking F(1) to F(0). The sequence is that of ATP synthase subunit b 2 from Crocosphaera subtropica (strain ATCC 51142 / BH68) (Cyanothece sp. (strain ATCC 51142)).